A 348-amino-acid polypeptide reads, in one-letter code: Phosphoribosylformylglycinamidine cyclo-ligase (348 aa).

Belongs to the AIR synthase family.

It is found in the cytoplasm. It carries out the reaction 2-formamido-N(1)-(5-O-phospho-beta-D-ribosyl)acetamidine + ATP = 5-amino-1-(5-phospho-beta-D-ribosyl)imidazole + ADP + phosphate + H(+). It functions in the pathway purine metabolism; IMP biosynthesis via de novo pathway; 5-amino-1-(5-phospho-D-ribosyl)imidazole from N(2)-formyl-N(1)-(5-phospho-D-ribosyl)glycinamide: step 2/2. This Ruegeria pomeroyi (strain ATCC 700808 / DSM 15171 / DSS-3) (Silicibacter pomeroyi) protein is Phosphoribosylformylglycinamidine cyclo-ligase.